The chain runs to 413 residues: Dual-specificity RNA methyltransferase RlmN (413 aa).

Glu126 (proton acceptor) is an active-site residue. The Radical SAM core domain occupies 132–381 (EEGRGTLCIS…IRTPRGRDIL (250 aa)). An intrachain disulfide couples Cys139 to Cys384. Positions 146, 150, and 153 each coordinate [4Fe-4S] cluster. S-adenosyl-L-methionine contacts are provided by residues 210-211 (GE), Ser242, 264-266 (SLH), and Asn341. Cys384 serves as the catalytic S-methylcysteine intermediate.

The protein belongs to the radical SAM superfamily. RlmN family. The cofactor is [4Fe-4S] cluster.

The protein localises to the cytoplasm. The catalysed reaction is adenosine(2503) in 23S rRNA + 2 reduced [2Fe-2S]-[ferredoxin] + 2 S-adenosyl-L-methionine = 2-methyladenosine(2503) in 23S rRNA + 5'-deoxyadenosine + L-methionine + 2 oxidized [2Fe-2S]-[ferredoxin] + S-adenosyl-L-homocysteine. It carries out the reaction adenosine(37) in tRNA + 2 reduced [2Fe-2S]-[ferredoxin] + 2 S-adenosyl-L-methionine = 2-methyladenosine(37) in tRNA + 5'-deoxyadenosine + L-methionine + 2 oxidized [2Fe-2S]-[ferredoxin] + S-adenosyl-L-homocysteine. Specifically methylates position 2 of adenine 2503 in 23S rRNA and position 2 of adenine 37 in tRNAs. m2A2503 modification seems to play a crucial role in the proofreading step occurring at the peptidyl transferase center and thus would serve to optimize ribosomal fidelity. This chain is Dual-specificity RNA methyltransferase RlmN, found in Sinorhizobium medicae (strain WSM419) (Ensifer medicae).